Here is a 93-residue protein sequence, read N- to C-terminus: MSVTPERKSELISEYCLKKGDTGSSFVQCAILSERIRNLTEHLKIHKKDFHCRRGLMVLVCRRRNELQYIRRKYGNDRYLALVKQLGIRDVFH.

Belongs to the universal ribosomal protein uS15 family. In terms of assembly, part of the 30S ribosomal subunit. Forms a bridge to the 50S subunit in the 70S ribosome, contacting the 23S rRNA.

Functionally, one of the primary rRNA binding proteins, it binds directly to 16S rRNA where it helps nucleate assembly of the platform of the 30S subunit by binding and bridging several RNA helices of the 16S rRNA. In terms of biological role, forms an intersubunit bridge (bridge B4) with the 23S rRNA of the 50S subunit in the ribosome. This is Small ribosomal subunit protein uS15 from Ehrlichia ruminantium (strain Gardel).